The sequence spans 101 residues: Aspartyl/glutamyl-tRNA(Asn/Gln) amidotransferase subunit C (101 aa).

It belongs to the GatC family. As to quaternary structure, heterotrimer of A, B and C subunits.

The enzyme catalyses L-glutamyl-tRNA(Gln) + L-glutamine + ATP + H2O = L-glutaminyl-tRNA(Gln) + L-glutamate + ADP + phosphate + H(+). The catalysed reaction is L-aspartyl-tRNA(Asn) + L-glutamine + ATP + H2O = L-asparaginyl-tRNA(Asn) + L-glutamate + ADP + phosphate + 2 H(+). Allows the formation of correctly charged Asn-tRNA(Asn) or Gln-tRNA(Gln) through the transamidation of misacylated Asp-tRNA(Asn) or Glu-tRNA(Gln) in organisms which lack either or both of asparaginyl-tRNA or glutaminyl-tRNA synthetases. The reaction takes place in the presence of glutamine and ATP through an activated phospho-Asp-tRNA(Asn) or phospho-Glu-tRNA(Gln). In Lactococcus lactis subsp. cremoris (strain MG1363), this protein is Aspartyl/glutamyl-tRNA(Asn/Gln) amidotransferase subunit C.